The following is a 340-amino-acid chain: 4-hydroxy-3-methylbut-2-enyl diphosphate reductase (340 aa).

Position 13 (C13) interacts with [4Fe-4S] cluster. Positions 42 and 75 each coordinate (2E)-4-hydroxy-3-methylbut-2-enyl diphosphate. Dimethylallyl diphosphate is bound by residues H42 and H75. H42 and H75 together coordinate isopentenyl diphosphate. C97 serves as a coordination point for [4Fe-4S] cluster. H125 serves as a coordination point for (2E)-4-hydroxy-3-methylbut-2-enyl diphosphate. H125 contacts dimethylallyl diphosphate. Residue H125 participates in isopentenyl diphosphate binding. The Proton donor role is filled by E127. Residue T165 participates in (2E)-4-hydroxy-3-methylbut-2-enyl diphosphate binding. C195 contributes to the [4Fe-4S] cluster binding site. (2E)-4-hydroxy-3-methylbut-2-enyl diphosphate contacts are provided by S223, S224, N225, and S267. S223, S224, N225, and S267 together coordinate dimethylallyl diphosphate. S223, S224, N225, and S267 together coordinate isopentenyl diphosphate. A disordered region spans residues 317–340; that stretch reads NNLDNKTAASEEADSLSNDTEQEA. Polar residues predominate over residues 331 to 340; the sequence is SLSNDTEQEA.

This sequence belongs to the IspH family. The cofactor is [4Fe-4S] cluster.

The catalysed reaction is isopentenyl diphosphate + 2 oxidized [2Fe-2S]-[ferredoxin] + H2O = (2E)-4-hydroxy-3-methylbut-2-enyl diphosphate + 2 reduced [2Fe-2S]-[ferredoxin] + 2 H(+). The enzyme catalyses dimethylallyl diphosphate + 2 oxidized [2Fe-2S]-[ferredoxin] + H2O = (2E)-4-hydroxy-3-methylbut-2-enyl diphosphate + 2 reduced [2Fe-2S]-[ferredoxin] + 2 H(+). The protein operates within isoprenoid biosynthesis; dimethylallyl diphosphate biosynthesis; dimethylallyl diphosphate from (2E)-4-hydroxy-3-methylbutenyl diphosphate: step 1/1. It functions in the pathway isoprenoid biosynthesis; isopentenyl diphosphate biosynthesis via DXP pathway; isopentenyl diphosphate from 1-deoxy-D-xylulose 5-phosphate: step 6/6. In terms of biological role, catalyzes the conversion of 1-hydroxy-2-methyl-2-(E)-butenyl 4-diphosphate (HMBPP) into a mixture of isopentenyl diphosphate (IPP) and dimethylallyl diphosphate (DMAPP). Acts in the terminal step of the DOXP/MEP pathway for isoprenoid precursor biosynthesis. This is 4-hydroxy-3-methylbut-2-enyl diphosphate reductase from Zymomonas mobilis subsp. mobilis (strain ATCC 31821 / ZM4 / CP4).